Reading from the N-terminus, the 1513-residue chain is DNA polymerase alpha catalytic subunit (1513 aa).

The tract at residues 235 to 254 is disordered; sequence STNQNANASDSKRVSNQTND. Zn(2+) contacts are provided by Cys1344, Cys1347, Cys1370, Cys1373, Cys1404, Cys1409, Cys1422, and Cys1427. Residues 1344–1373 form a CysA-type zinc finger; sequence CPHCSESYHFPGIFQDGKNNTLSGLLCIKC. The CysB motif signature appears at 1404–1427; sequence CQEPACGAVSRQLLYNNKCINLAC.

The protein belongs to the DNA polymerase type-B family.

It is found in the nucleus. It catalyses the reaction DNA(n) + a 2'-deoxyribonucleoside 5'-triphosphate = DNA(n+1) + diphosphate. Functionally, polymerase alpha in a complex with DNA primase is a replicative polymerase. The polypeptide is DNA polymerase alpha catalytic subunit (Oxytricha trifallax (Sterkiella histriomuscorum)).